Reading from the N-terminus, the 224-residue chain is Urease accessory protein UreF (224 aa).

It belongs to the UreF family. In terms of assembly, ureD, UreF and UreG form a complex that acts as a GTP-hydrolysis-dependent molecular chaperone, activating the urease apoprotein by helping to assemble the nickel containing metallocenter of UreC. The UreE protein probably delivers the nickel.

It is found in the cytoplasm. Required for maturation of urease via the functional incorporation of the urease nickel metallocenter. The sequence is that of Urease accessory protein UreF from Escherichia coli O157:H7.